Reading from the N-terminus, the 464-residue chain is Zinc transporter 6 (464 aa).

At 1–33 the chain is on the cytoplasmic side; the sequence is MGTIYLFRKTQRSLLGKLTQEFRLVTADRRSWK. Residues 34 to 54 form a helical membrane-spanning segment; it reads ILLFGAINVVCTGFLLTWCSS. Over 55-64 the chain is Extracellular; that stretch reads TNSMALTAYT. The chain crosses the membrane as a helical span at residues 65–85; it reads YLTIFDLFSLITCLISYWVMM. Topologically, residues 86 to 98 are cytoplasmic; it reads KKPSPTYSFGFER. A helical transmembrane segment spans residues 99–119; that stretch reads FEVLSVFASTVLAQLGALFIL. Over 120 to 134 the chain is Extracellular; it reads KESAERFVEQPEIHT. The helical transmembrane segment at 135-155 threads the bilayer; that stretch reads GRLLVGTFVALCFNLFSMLSI. The Cytoplasmic portion of the chain corresponds to 156 to 200; the sequence is RNKPFAYVSEAASTSWLQEHVADLSRSLCGIIPGLSSIFLPRMNP. Residues 201-221 form a helical membrane-spanning segment; that stretch reads FVLIDIAGALALCITYMLIEI. At 222–228 the chain is on the extracellular side; the sequence is NNYFAVD. Residues 229-249 form a helical membrane-spanning segment; sequence TASAIAIAVMTFGTMYPMSVY. Over 250–464 the chain is Cytoplasmic; it reads SGKVLLQTTP…TPGQFTQFKQ (215 aa).

Belongs to the cation diffusion facilitator (CDF) transporter (TC 2.A.4) family. SLC30A subfamily. In terms of assembly, heterodimer with SLC30A5; form a functional zinc ion transmembrane transporter.

It localises to the golgi apparatus. It is found in the trans-Golgi network membrane. In terms of biological role, has probably no intrinsic transporter activity but together with SLC30A5 forms a functional zinc ion:proton antiporter heterodimer, mediating zinc entry into the lumen of organelles along the secretory pathway. As part of that zinc ion:proton antiporter, contributes to zinc ion homeostasis within the early secretory pathway and regulates the activation and folding of enzymes like alkaline phosphatases and enzymes involved in phosphatidylinositol glycan anchor biosynthesis. This chain is Zinc transporter 6 (slc30a6), found in Xenopus tropicalis (Western clawed frog).